We begin with the raw amino-acid sequence, 332 residues long: Glyceraldehyde-3-phosphate dehydrogenase 2 (332 aa).

NAD(+) is bound by residues 11–12 (RI), Asp-32, and Arg-77. D-glyceraldehyde 3-phosphate contacts are provided by residues 148–150 (SCT), Thr-179, 208–209 (TG), and Arg-231. Cys-149 functions as the Nucleophile in the catalytic mechanism. Tyr-273 bears the Phosphotyrosine mark. Thr-274 carries the phosphothreonine modification. Asn-313 is a binding site for NAD(+).

The protein belongs to the glyceraldehyde-3-phosphate dehydrogenase family. In terms of assembly, homotetramer.

It is found in the cytoplasm. It carries out the reaction D-glyceraldehyde 3-phosphate + phosphate + NAD(+) = (2R)-3-phospho-glyceroyl phosphate + NADH + H(+). It participates in carbohydrate degradation; glycolysis; pyruvate from D-glyceraldehyde 3-phosphate: step 1/5. This Drosophila melanogaster (Fruit fly) protein is Glyceraldehyde-3-phosphate dehydrogenase 2 (Gapdh2).